We begin with the raw amino-acid sequence, 339 residues long: Anthranilate phosphoribosyltransferase (339 aa).

5-phospho-alpha-D-ribose 1-diphosphate contacts are provided by residues G81, 84-85 (GD), S89, 91-94 (NVSS), 109-117 (KHGNRALSS), and A121. G81 contributes to the anthranilate binding site. Position 93 (S93) interacts with Mg(2+). Anthranilate is bound at residue N112. R167 provides a ligand contact to anthranilate. Residues D225 and E226 each contribute to the Mg(2+) site.

Belongs to the anthranilate phosphoribosyltransferase family. As to quaternary structure, homodimer. It depends on Mg(2+) as a cofactor.

It catalyses the reaction N-(5-phospho-beta-D-ribosyl)anthranilate + diphosphate = 5-phospho-alpha-D-ribose 1-diphosphate + anthranilate. The protein operates within amino-acid biosynthesis; L-tryptophan biosynthesis; L-tryptophan from chorismate: step 2/5. Catalyzes the transfer of the phosphoribosyl group of 5-phosphorylribose-1-pyrophosphate (PRPP) to anthranilate to yield N-(5'-phosphoribosyl)-anthranilate (PRA). This Brucella canis (strain ATCC 23365 / NCTC 10854 / RM-666) protein is Anthranilate phosphoribosyltransferase.